The chain runs to 461 residues: Argininosuccinate lyase (461 aa).

This sequence belongs to the lyase 1 family. Argininosuccinate lyase subfamily.

The protein localises to the cytoplasm. It carries out the reaction 2-(N(omega)-L-arginino)succinate = fumarate + L-arginine. The protein operates within amino-acid biosynthesis; L-arginine biosynthesis; L-arginine from L-ornithine and carbamoyl phosphate: step 3/3. In Dehalococcoides mccartyi (strain ATCC BAA-2266 / KCTC 15142 / 195) (Dehalococcoides ethenogenes (strain 195)), this protein is Argininosuccinate lyase.